We begin with the raw amino-acid sequence, 491 residues long: Eupatolide synthase (491 aa).

The chain crosses the membrane as a helical; Signal-anchor for type II membrane protein span at residues L7–W27. C430 contributes to the heme binding site.

The protein belongs to the cytochrome P450 family. Heme serves as cofactor. Expressed in leaf primordia.

Its subcellular location is the membrane. It carries out the reaction 8beta-hydroxygermacra-1(10),4,11(13)-trien-12-oate + reduced [NADPH--hemoprotein reductase] + O2 = eupatolide + oxidized [NADPH--hemoprotein reductase] + 2 H2O. It participates in secondary metabolite biosynthesis; terpenoid biosynthesis. In terms of biological role, involved in the biosynthesis of germacrene-derived sesquiterpene lactones. Hydroxylates 8-beta-hydroxy-germacrene A acid to 6-alpha,8-beta-hydroxy-germacrene A acid, which, in turn, undergo spontaneous lactonization to become eupatolide. This chain is Eupatolide synthase, found in Helianthus annuus (Common sunflower).